A 2375-amino-acid polypeptide reads, in one-letter code: Talin-2 (2375 aa).

The FERM domain occupies 88 to 406; sequence RPQKIRMLDG…GYIDIILKKK (319 aa). The interval 312–406 is interaction with PIP5K1C; it reads GVSFFLVKEK…GYIDIILKKK (95 aa). Residues Ser428, Ser450, Ser624, and Ser1024 each carry the phosphoserine modification. Tyr1666 bears the Phosphotyrosine mark. The I/LWEQ domain maps to 2205-2375; sequence TEWVDPEDPT…KRLQAAGNAV (171 aa).

Interacts directly with PIP5K1C.

Its subcellular location is the cytoplasm. The protein resides in the cell junction. It localises to the focal adhesion. The protein localises to the synapse. It is found in the cell membrane. Its subcellular location is the cytoskeleton. Its function is as follows. As a major component of focal adhesion plaques that links integrin to the actin cytoskeleton, may play an important role in cell adhesion. Recruits PIP5K1C to focal adhesion plaques and strongly activates its kinase activity. The protein is Talin-2 (Tln2) of Mus musculus (Mouse).